A 157-amino-acid polypeptide reads, in one-letter code: Protein E6 (157 aa).

2 zinc fingers span residues 41 to 77 (CNFC…CRVC) and 114 to 150 (CQTC…CRQC).

This sequence belongs to the papillomaviridae E6 protein family. As to quaternary structure, forms homodimers. Interacts with ubiquitin-protein ligase UBE3A/E6-AP; this interaction stimulates UBE3A ubiquitin activity. Interacts with host BAK1.

It localises to the host cytoplasm. Its subcellular location is the host nucleus. In terms of biological role, plays a major role in the induction and maintenance of cellular transformation. E6 associates with host UBE3A/E6-AP ubiquitin-protein ligase and modulates its activity. Protects host keratinocytes from apoptosis by mediating the degradation of host BAK1. May also inhibit host immune response. The sequence is that of Protein E6 from Human papillomavirus 36.